The primary structure comprises 529 residues: Bifunctional purine biosynthesis protein PurH (529 aa).

The 148-residue stretch at 1 to 148 (MQQRRPIRRA…KNHKDVAIVV (148 aa)) folds into the MGS-like domain.

It belongs to the PurH family.

The enzyme catalyses (6R)-10-formyltetrahydrofolate + 5-amino-1-(5-phospho-beta-D-ribosyl)imidazole-4-carboxamide = 5-formamido-1-(5-phospho-D-ribosyl)imidazole-4-carboxamide + (6S)-5,6,7,8-tetrahydrofolate. It catalyses the reaction IMP + H2O = 5-formamido-1-(5-phospho-D-ribosyl)imidazole-4-carboxamide. Its pathway is purine metabolism; IMP biosynthesis via de novo pathway; 5-formamido-1-(5-phospho-D-ribosyl)imidazole-4-carboxamide from 5-amino-1-(5-phospho-D-ribosyl)imidazole-4-carboxamide (10-formyl THF route): step 1/1. It functions in the pathway purine metabolism; IMP biosynthesis via de novo pathway; IMP from 5-formamido-1-(5-phospho-D-ribosyl)imidazole-4-carboxamide: step 1/1. The protein is Bifunctional purine biosynthesis protein PurH of Yersinia enterocolitica serotype O:8 / biotype 1B (strain NCTC 13174 / 8081).